An 862-amino-acid chain; its full sequence is Protein kintoun (862 aa).

Disordered regions lie at residues 208–229 (KLLPPLPNVPAPGKTGSERTTK), 564–602 (TKREEHGEPECDEKDGSEAEKARTLQKAKRNSRKKKKER), 626–670 (GEGA…STMP), and 743–854 (RREV…QFKS). A compositionally biased stretch (basic and acidic residues) spans 564–586 (TKREEHGEPECDEKDGSEAEKAR). Basic residues predominate over residues 587–601 (TLQKAKRNSRKKKKE). 2 stretches are compositionally biased toward basic and acidic residues: residues 748–757 (RRADARRMSE) and 766–785 (KDAHHHDDEHCSSSDQHDEK).

Belongs to the PIH1 family. Kintoun subfamily.

It is found in the cytoplasm. Required for cytoplasmic pre-assembly of axonemal dyneins, thereby playing a central role in motility in cilia and flagella. Involved in pre-assembly of dynein arm complexes in the cytoplasm before intraflagellar transport loads them for the ciliary compartment. In Anopheles gambiae (African malaria mosquito), this protein is Protein kintoun.